Reading from the N-terminus, the 230-residue chain is UPF0173 metal-dependent hydrolase SPO2976 (230 aa).

The protein belongs to the UPF0173 family.

In Ruegeria pomeroyi (strain ATCC 700808 / DSM 15171 / DSS-3) (Silicibacter pomeroyi), this protein is UPF0173 metal-dependent hydrolase SPO2976.